Here is a 390-residue protein sequence, read N- to C-terminus: MRKMLAAVSRVLSGVAQKPASRVLVASRHFANDATFEIKKCDLHRLEEGPPVTTVLTREDGLKYYRMMQTVRRMELKADQLYKQKIIRGFCHLCDGQEACCVGLEAGINPTDHLITAYRAHGFTFTRGLSVREILAELTGRRGGCAKGKGGSMHMYAKNFYGGNGIVGAQVPLGAGIALACKYNGKDEVCLTLYGDGAANQGQIFEAYNMAALWKLPCIFICENNRYGMGTSVERAAASTDYYKRGDFIPGLRVDGMDILCVREATKFAAAYCRSGKGPILMELQTYRYHGHSMSDPGVSYRTREEIQEVRSKSDPIMLLKDRMVNSNLASVEELKEIDVEVRKEIEDAAQFATADPEPPLEELGYHIYCNDPPFEVRGANQWIKFKSIS.

A mitochondrion-targeting transit peptide spans 1 to 29 (MRKMLAAVSRVLSGVAQKPASRVLVASRH). An N6-acetyllysine; alternate modification is found at K63. N6-succinyllysine; alternate is present on K63. Positions 92, 118, 119, 157, 165, 167, 196, 197, 198, 225, and 227 each coordinate pyruvate. Residues Y118 and R119 each coordinate thiamine diphosphate. Residues G165, V167, D196, G197, A198, and N225 each contribute to the thiamine diphosphate site. D196 is a Mg(2+) binding site. Mg(2+) contacts are provided by N225 and Y227. S232 is subject to Phosphoserine; by PDK1. N6-acetyllysine; alternate is present on K244. Position 244 is an N6-succinyllysine; alternate (K244). K267 bears the N6-acetyllysine mark. Residue K277 is modified to N6-succinyllysine. H292 is a thiamine diphosphate binding site. The residue at position 293 (S293) is a Phosphoserine; by PDK1, PDK2, PDK3 and PDK4. A Phosphoserine modification is found at S295. A Phosphoserine; by PDK1, PDK2, PDK3 and PDK4 modification is found at S300. Y301 is subject to Phosphotyrosine. An N6-acetyllysine; alternate modification is found at K313. N6-succinyllysine; alternate is present on K313. 2 positions are modified to N6-acetyllysine: K321 and K336. Position 385 is an N6-succinyllysine (K385).

Heterotetramer of two PDHA1 and two PDHB subunits. The heterotetramer interacts with DLAT, and is part of the multimeric pyruvate dehydrogenase complex that contains multiple copies of pyruvate dehydrogenase (E1), dihydrolipoamide acetyltransferase (DLAT, E2) and lipoamide dehydrogenase (DLD, E3). These subunits are bound to an inner core composed of about 48 DLAT and 12 PDHX molecules. Thiamine diphosphate is required as a cofactor. Requires Mg(2+) as cofactor. In terms of processing, phosphorylation at Ser-232, Ser-293 and Ser-300 by PDK family kinases inactivates the enzyme; for this phosphorylation at a single site is sufficient. Phosphorylation at Ser-293 interferes with access to active site, and thereby inactivates the enzyme. Dephosphorylation at all three sites, i.e. at Ser-232, Ser-293 and Ser-300, is required for reactivation. Post-translationally, acetylation alters the phosphorylation pattern. Deacetylated by SIRT3.

Its subcellular location is the mitochondrion matrix. The enzyme catalyses N(6)-[(R)-lipoyl]-L-lysyl-[protein] + pyruvate + H(+) = N(6)-[(R)-S(8)-acetyldihydrolipoyl]-L-lysyl-[protein] + CO2. Pyruvate dehydrogenase activity is inhibited by phosphorylation of PDHA1; it is reactivated by dephosphorylation. Functionally, the pyruvate dehydrogenase complex catalyzes the overall conversion of pyruvate to acetyl-CoA and CO(2), and thereby links the glycolytic pathway to the tricarboxylic cycle. The polypeptide is Pyruvate dehydrogenase E1 component subunit alpha, somatic form, mitochondrial (PDHA1) (Bos taurus (Bovine)).